A 457-amino-acid polypeptide reads, in one-letter code: Argininosuccinate lyase (457 aa).

This sequence belongs to the lyase 1 family. Argininosuccinate lyase subfamily.

Its subcellular location is the cytoplasm. The catalysed reaction is 2-(N(omega)-L-arginino)succinate = fumarate + L-arginine. The protein operates within amino-acid biosynthesis; L-arginine biosynthesis; L-arginine from L-ornithine and carbamoyl phosphate: step 3/3. The sequence is that of Argininosuccinate lyase from Escherichia coli O139:H28 (strain E24377A / ETEC).